The chain runs to 149 residues: Arginine repressor (149 aa).

Belongs to the ArgR family.

The protein resides in the cytoplasm. It functions in the pathway amino-acid biosynthesis; L-arginine biosynthesis [regulation]. Its function is as follows. Regulates arginine biosynthesis genes. This Exiguobacterium sibiricum (strain DSM 17290 / CCUG 55495 / CIP 109462 / JCM 13490 / 255-15) protein is Arginine repressor.